A 198-amino-acid chain; its full sequence is Endoribonuclease YbeY (198 aa).

Residues H156, H160, and H166 each coordinate Zn(2+).

The protein belongs to the endoribonuclease YbeY family. It depends on Zn(2+) as a cofactor.

It is found in the cytoplasm. Functionally, single strand-specific metallo-endoribonuclease involved in late-stage 70S ribosome quality control and in maturation of the 3' terminus of the 16S rRNA. The sequence is that of Endoribonuclease YbeY from Cupriavidus necator (strain ATCC 17699 / DSM 428 / KCTC 22496 / NCIMB 10442 / H16 / Stanier 337) (Ralstonia eutropha).